We begin with the raw amino-acid sequence, 218 residues long: 23 kDa integral membrane protein (218 aa).

Residues 1-12 are Cytoplasmic-facing; sequence MATLGTGMRCLK. Residues 13-36 form a helical membrane-spanning segment; it reads SCVFVLNIICLLCSLVLIGAGAYV. Over 37–55 the chain is Extracellular; it reads EVKFSQYGDNLHKVWQAAP. A helical transmembrane segment spans residues 56–71; the sequence is IAIIVVGVIILIVSFL. At 72–82 the chain is on the cytoplasmic side; sequence GCCGAIKENVC. A helical membrane pass occupies residues 83–108; it reads MLYMYAFFLVVLLIAELAAAIVAVVY. The Extracellular segment spans residues 109–183; that stretch reads KDRIDSEIDA…SVFGAFLKRN (75 aa). N-linked (GlcNAc...) asparagine glycosylation occurs at Asn-165. A helical membrane pass occupies residues 184 to 205; the sequence is LVIVACVAFGVCFFQLLSIVIA. Residues 206–218 are Cytoplasmic-facing; sequence CCLGRQIKEYENV.

The protein belongs to the tetraspanin (TM4SF) family.

It localises to the membrane. The protein is 23 kDa integral membrane protein of Schistosoma mansoni (Blood fluke).